Consider the following 298-residue polypeptide: Glutamyl-Q tRNA(Asp) synthetase (298 aa).

L-glutamate contacts are provided by residues 9-13 (RFAPS) and Glu-45. Positions 12–22 (PSPSGELHFGS) match the 'HIGH' region motif. Zn(2+) is bound by residues Cys-101, Cys-103, Tyr-115, and Cys-119. The L-glutamate site is built by Tyr-172 and Arg-190. The 'KMSKS' region signature appears at 228-232 (KLSKQ). Position 231 (Lys-231) interacts with ATP.

It belongs to the class-I aminoacyl-tRNA synthetase family. GluQ subfamily. The cofactor is Zn(2+).

Its function is as follows. Catalyzes the tRNA-independent activation of glutamate in presence of ATP and the subsequent transfer of glutamate onto a tRNA(Asp). Glutamate is transferred on the 2-amino-5-(4,5-dihydroxy-2-cyclopenten-1-yl) moiety of the queuosine in the wobble position of the QUC anticodon. The sequence is that of Glutamyl-Q tRNA(Asp) synthetase from Salmonella choleraesuis (strain SC-B67).